The sequence spans 1094 residues: Probable arabinosyltransferase A (1094 aa).

A run of 13 helical transmembrane segments spans residues 12–34, 205–224, 247–269, 322–344, 356–375, 408–430, 451–470, 519–536, 543–565, 575–597, 604–626, 641–663, and 684–706; these read IARL…VPLL, AVML…LAAL, GFAS…VIGA, VWMR…RFVL, SNRV…WLPF, AAVA…IALA, GLLA…TVVV, FAVL…FVLL, GLAS…LLTF, GAFA…RIGL, TLYV…GWFY, IASH…LAAW, and ILAS…GSMA.

Belongs to the emb family.

The protein localises to the cell membrane. Arabinosyl transferase responsible for the polymerization of arabinose into the arabinan of arabinogalactan. The polypeptide is Probable arabinosyltransferase A (embA) (Mycobacterium tuberculosis (strain CDC 1551 / Oshkosh)).